Reading from the N-terminus, the 192-residue chain is Xanthine phosphoribosyltransferase 2 (192 aa).

Residues L20 and N27 each coordinate xanthine. 131–135 (ANACA) contacts 5-phospho-alpha-D-ribose 1-diphosphate. K159 contacts xanthine.

The protein belongs to the purine/pyrimidine phosphoribosyltransferase family. Xpt subfamily. As to quaternary structure, homodimer.

It localises to the cytoplasm. It carries out the reaction XMP + diphosphate = xanthine + 5-phospho-alpha-D-ribose 1-diphosphate. Its pathway is purine metabolism; XMP biosynthesis via salvage pathway; XMP from xanthine: step 1/1. Functionally, converts the preformed base xanthine, a product of nucleic acid breakdown, to xanthosine 5'-monophosphate (XMP), so it can be reused for RNA or DNA synthesis. The protein is Xanthine phosphoribosyltransferase 2 of Clostridium perfringens (strain ATCC 13124 / DSM 756 / JCM 1290 / NCIMB 6125 / NCTC 8237 / Type A).